We begin with the raw amino-acid sequence, 499 residues long: Laccase (499 aa).

2 consecutive Plastocyanin-like domains span residues 2–127 and 139–281; these read VGPV…FVVY and VDND…ILRY. Residues Asn-51 and Asn-54 are each glycosylated (N-linked (GlcNAc...) asparagine). Cu cation-binding residues include His-64, His-66, His-109, and His-111. Cystine bridges form between Cys-85/Cys-488 and Cys-117/Cys-205. Tyr-196 bears the 3'-nitrotyrosine mark. N-linked (GlcNAc...) asparagine glycans are attached at residues Asn-208, Asn-217, Asn-292, and Asn-333. Residues 348–470 enclose the Plastocyanin-like 3 domain; the sequence is SVPVLLQILS…GGFAVVQAED (123 aa). Tyr-372 is modified (3'-nitrotyrosine). Asn-377 carries an N-linked (GlcNAc...) asparagine glycan. 3 residues coordinate Cu cation: His-395, His-398, and His-400. N-linked (GlcNAc...) asparagine glycosylation is found at Asn-416 and Asn-436. The Cu cation site is built by His-452, Cys-453, His-454, and His-458.

It belongs to the multicopper oxidase family. It depends on Cu cation as a cofactor.

It localises to the secreted. It carries out the reaction 4 hydroquinone + O2 = 4 benzosemiquinone + 2 H2O. In terms of biological role, lignin degradation and detoxification of lignin-derived products. In Trametes maxima (White-rot fungus), this protein is Laccase.